The primary structure comprises 309 residues: L-aminoadipate-semialdehyde dehydrogenase-phosphopantetheinyl transferase (309 aa).

Residues Arg47, 86 to 91, and 108 to 111 each bind CoA; these read RTAKGK and NISH. The Mg(2+) site is built by Asp129 and Glu181. 181–185 contributes to the CoA binding site; that stretch reads ESFIK. Ser258 is subject to Phosphoserine.

This sequence belongs to the P-Pant transferase superfamily. AcpS family. As to quaternary structure, monomer. Mg(2+) serves as cofactor. Detected in heart, skeletal muscle, placenta, testis, brain, pancreas, liver and kidney.

It localises to the cytoplasm. The protein resides in the cytosol. The catalysed reaction is apo-[ACP] + CoA = holo-[ACP] + adenosine 3',5'-bisphosphate + H(+). It catalyses the reaction apo-[ACP] + acetyl-CoA = acetyl-[ACP] + adenosine 3',5'-bisphosphate + H(+). In terms of biological role, catalyzes the post-translational modification of target proteins by phosphopantetheine. Can transfer the 4'-phosphopantetheine moiety from coenzyme A, regardless of whether the CoA is presented in the free thiol form or as an acetyl thioester, to a serine residue of a broad range of acceptors including the acyl carrier domain of FASN. In Homo sapiens (Human), this protein is L-aminoadipate-semialdehyde dehydrogenase-phosphopantetheinyl transferase (AASDHPPT).